A 43-amino-acid polypeptide reads, in one-letter code: Protein PsbN (43 aa).

A helical transmembrane segment spans residues 7-27 (LIIFIASLLLGLTGYSIYTAF).

It belongs to the PsbN family.

Its subcellular location is the plastid. It localises to the chloroplast thylakoid membrane. May play a role in photosystem I and II biogenesis. The protein is Protein PsbN of Guillardia theta (Cryptophyte).